The primary structure comprises 330 residues: Ketol-acid reductoisomerase (NADP(+)) (330 aa).

Residues 2–182 (IHVYYDKDAN…GCTKAGVIET (181 aa)) enclose the KARI N-terminal Rossmann domain. Residues 25 to 28 (YGSQ), arginine 48, serine 51, serine 53, and 83 to 86 (DEVQ) contribute to the NADP(+) site. Histidine 108 is an active-site residue. Glycine 134 serves as a coordination point for NADP(+). A KARI C-terminal knotted domain is found at 183–328 (TFKEETETDL…KKLRDMMPWI (146 aa)). Mg(2+) is bound by residues aspartate 191, glutamate 195, glutamate 227, and glutamate 231. Serine 252 is a binding site for substrate.

It belongs to the ketol-acid reductoisomerase family. It depends on Mg(2+) as a cofactor.

It carries out the reaction (2R)-2,3-dihydroxy-3-methylbutanoate + NADP(+) = (2S)-2-acetolactate + NADPH + H(+). The catalysed reaction is (2R,3R)-2,3-dihydroxy-3-methylpentanoate + NADP(+) = (S)-2-ethyl-2-hydroxy-3-oxobutanoate + NADPH + H(+). Its pathway is amino-acid biosynthesis; L-isoleucine biosynthesis; L-isoleucine from 2-oxobutanoate: step 2/4. The protein operates within amino-acid biosynthesis; L-valine biosynthesis; L-valine from pyruvate: step 2/4. Its function is as follows. Involved in the biosynthesis of branched-chain amino acids (BCAA). Catalyzes an alkyl-migration followed by a ketol-acid reduction of (S)-2-acetolactate (S2AL) to yield (R)-2,3-dihydroxy-isovalerate. In the isomerase reaction, S2AL is rearranged via a Mg-dependent methyl migration to produce 3-hydroxy-3-methyl-2-ketobutyrate (HMKB). In the reductase reaction, this 2-ketoacid undergoes a metal-dependent reduction by NADPH to yield (R)-2,3-dihydroxy-isovalerate. The sequence is that of Ketol-acid reductoisomerase (NADP(+)) from Halothermothrix orenii (strain H 168 / OCM 544 / DSM 9562).